Reading from the N-terminus, the 269-residue chain is MSGNSEVEYLKSLVSQLQDKIHHLEKSTSTSVSNTISSVTSALSPSSSIKPPRMVLIGPPGAGKGTQAPNISSKYCICHLATGDMLREQVARQTELGKAAKQIMDQGGLVSDEIMVGMIKQELEKNAECKNGFILDGFPRTVPQASKLDAMLAERKQAIDHAIELKIPDVLLISRITGRLVHPASGRSYHKEFNPPKKPMTDDITGEPLIQRSDDNVGTLRKRLDTYHAQTGPVVDYYKGTGVWTPVDAAQSPKLVWASISSILESKKN.

61–66 (GAGKGT) is a binding site for ATP. The tract at residues 81-110 (ATGDMLREQVARQTELGKAAKQIMDQGGLV) is NMP. AMP-binding positions include Thr-82, Arg-87, 108-110 (GLV), 137-140 (GFPR), and Gln-144. The segment at 178 to 215 (GRLVHPASGRSYHKEFNPPKKPMTDDITGEPLIQRSDD) is LID. ATP is bound by residues Arg-179 and 188–189 (SY). The AMP site is built by Arg-212 and Arg-223. Gln-251 is a binding site for ATP.

This sequence belongs to the adenylate kinase family. AK2 subfamily. In terms of assembly, monomer.

It localises to the cytoplasm. Its subcellular location is the cytosol. The protein localises to the mitochondrion intermembrane space. It catalyses the reaction AMP + ATP = 2 ADP. Its function is as follows. Catalyzes the reversible transfer of the terminal phosphate group between ATP and AMP. Plays an important role in cellular energy homeostasis and in adenine nucleotide metabolism. Adenylate kinase activity is critical for regulation of the phosphate utilization and the AMP de novo biosynthesis pathways. This is Adenylate kinase from Cryptococcus neoformans var. neoformans serotype D (strain B-3501A) (Filobasidiella neoformans).